A 78-amino-acid chain; its full sequence is Large ribosomal subunit protein bL28 (78 aa).

A disordered region spans residues 1-25 (MSRVCQVTGKRPTVGNNRSHARNAT).

Belongs to the bacterial ribosomal protein bL28 family.

In Alteromonas mediterranea (strain DSM 17117 / CIP 110805 / LMG 28347 / Deep ecotype), this protein is Large ribosomal subunit protein bL28.